We begin with the raw amino-acid sequence, 401 residues long: Probable 2,3-bisphosphoglycerate-independent phosphoglycerate mutase (401 aa).

The protein belongs to the BPG-independent phosphoglycerate mutase family. A-PGAM subfamily.

It catalyses the reaction (2R)-2-phosphoglycerate = (2R)-3-phosphoglycerate. It participates in carbohydrate degradation; glycolysis; pyruvate from D-glyceraldehyde 3-phosphate: step 3/5. Its function is as follows. Catalyzes the interconversion of 2-phosphoglycerate and 3-phosphoglycerate. This Thermotoga sp. (strain RQ2) protein is Probable 2,3-bisphosphoglycerate-independent phosphoglycerate mutase.